The sequence spans 560 residues: Terminal uridylyltransferase Tailor (560 aa).

Residues 169 to 197 (EQHPKPNPNNQPVQPHPTHQTKQEKKQAQ) are disordered. Low complexity predominate over residues 176-188 (PNNQPVQPHPTHQ). Residues Asp278 and Asp280 each coordinate Mg(2+). The region spanning 455-522 (LRNFFAYFAK…VVQDPIQLNH (68 aa)) is the PAP-associated domain.

It depends on Mg(2+) as a cofactor.

The protein localises to the cytoplasm. It catalyses the reaction RNA(n) + UTP = RNA(n)-3'-uridine ribonucleotide + diphosphate. In terms of biological role, uridylyltransferase which mediates terminal uridylation of miRNAs, leading to their degradation. Has high specificity for splicing-derived miRNAs (mirtrons) and other miRNA substrates containing a 3'-G terminal nucleotide. Appears to be a major suppressor of mirtron biogenesis. In Drosophila melanogaster (Fruit fly), this protein is Terminal uridylyltransferase Tailor.